An 83-amino-acid polypeptide reads, in one-letter code: Small ribosomal subunit protein uS17 (83 aa).

This sequence belongs to the universal ribosomal protein uS17 family. Part of the 30S ribosomal subunit.

In terms of biological role, one of the primary rRNA binding proteins, it binds specifically to the 5'-end of 16S ribosomal RNA. This Ehrlichia canis (strain Jake) protein is Small ribosomal subunit protein uS17.